The following is a 210-amino-acid chain: Thymidylate kinase (210 aa).

An ATP-binding site is contributed by 11–18; the sequence is GVDGAGKT.

This sequence belongs to the thymidylate kinase family.

It catalyses the reaction dTMP + ATP = dTDP + ADP. Phosphorylation of dTMP to form dTDP in both de novo and salvage pathways of dTTP synthesis. The chain is Thymidylate kinase (tmk) from Mycoplasma pneumoniae (strain ATCC 29342 / M129 / Subtype 1) (Mycoplasmoides pneumoniae).